The chain runs to 308 residues: Exosporium protein A (308 aa).

It is found in the spore wall. In Clostridium sporogenes (strain ATCC 15579), this protein is Exosporium protein A.